A 328-amino-acid chain; its full sequence is Malate dehydrogenase (328 aa).

Position 12 to 18 (G12 to G18) interacts with NAD(+). R93 and R99 together coordinate substrate. NAD(+) is bound by residues N106, Q113, and T130–N132. 2 residues coordinate substrate: N132 and R163. The Proton acceptor role is filled by H188.

The protein belongs to the LDH/MDH superfamily. MDH type 2 family.

It carries out the reaction (S)-malate + NAD(+) = oxaloacetate + NADH + H(+). Its function is as follows. Catalyzes the reversible oxidation of malate to oxaloacetate. This is Malate dehydrogenase from Kocuria rhizophila (strain ATCC 9341 / DSM 348 / NBRC 103217 / DC2201).